The primary structure comprises 347 residues: P2Y purinoceptor 12 (347 aa).

Over 1-33 the chain is Extracellular; the sequence is MDVPGVNTTSANTTFSPGTSTLCVRDYKITQVL. Residues asparagine 7 and asparagine 12 are each glycosylated (N-linked (GlcNAc...) asparagine). 2 disulfide bridges follow: cysteine 23-cysteine 276 and cysteine 103-cysteine 181. A helical membrane pass occupies residues 34–56; sequence FPLLYTVLFFAGLITNSLAMRIF. Residues 57-67 are Cytoplasmic-facing; it reads FQIRSKSNFII. Residues serine 61 and serine 63 each carry the phosphoserine modification. Residues 68-88 traverse the membrane as a helical segment; sequence FLKNTVISDLLMILTFPFKIL. The Extracellular portion of the chain corresponds to 89–103; that stretch reads SDAKLGAGPLRTLVC. Arginine 99, cysteine 103, and tyrosine 111 together coordinate ADP. The chain crosses the membrane as a helical span at residues 104–124; it reads QVTSVTFYFTMYISISFLGLI. The Cytoplasmic segment spans residues 125 to 148; sequence TIDRYLKTTRPFKTSSPSNLLGAK. The chain crosses the membrane as a helical span at residues 149–168; it reads ILSVVIWAFMFLISLPNMIL. ADP-binding positions include 162-165, 181-185, histidine 193, and asparagine 197; these read SLPN and CSFLK. Topologically, residues 169-191 are extracellular; it reads TNRRPKDKDVTKCSFLKSEFGLV. A helical transmembrane segment spans residues 192–213; that stretch reads WHEIVNYICQVIFWINFLIVIV. Over 214–239 the chain is Cytoplasmic; the sequence is CYSLITKELYRSYVRTRGSAKVPKKK. A helical membrane pass occupies residues 240 to 265; the sequence is VNVKVFIIIAVFFICFVPFHFARIPY. ADP is bound by residues 262-265, glutamine 269, and lysine 286; that span reads RIPY. Residues 266 to 284 lie on the Extracellular side of the membrane; it reads TLSQTRAVFDCSAENTLFY. Residues 285-304 traverse the membrane as a helical segment; sequence VKESTLWLTSLNACLDPFIY. The Cytoplasmic segment spans residues 305–347; that stretch reads FFLCKSFRNSLTSMLRCSNSTSTSGTNKKKGQEGGEPSEETPM. The tract at residues 321 to 347 is disordered; it reads CSNSTSTSGTNKKKGQEGGEPSEETPM.

It belongs to the G-protein coupled receptor 1 family.

The protein localises to the cell membrane. Receptor for ADP and ATP coupled to G-proteins that inhibit the adenylyl cyclase second messenger system. Required for normal platelet aggregation and blood coagulation. In Mus musculus (Mouse), this protein is P2Y purinoceptor 12 (P2ry12).